Reading from the N-terminus, the 285-residue chain is Golgi phosphoprotein 3-like (285 aa).

The segment at methionine 1–lysine 42 is disordered. Residues arginine 10–lysine 42 show a composition bias toward basic and acidic residues. A 1,2-diacyl-sn-glycero-3-phospho-(1D-myo-inositol 4-phosphate) contacts are provided by tryptophan 67 and arginine 76. Serine 112 is subject to Phosphoserine. A 1,2-diacyl-sn-glycero-3-phospho-(1D-myo-inositol 4-phosphate) is bound by residues arginine 157 and arginine 160. The segment at glutamate 176–threonine 187 is beta-hairpin required for oligomerization.

Belongs to the GOLPH3/VPS74 family. As to quaternary structure, homooligomer. Does not interact MYO18; differs from GOLPH3 by its inability to interact with MYO18. May interact with ARF1.

The protein localises to the golgi apparatus. It is found in the golgi stack membrane. It localises to the trans-Golgi network membrane. Functionally, phosphatidylinositol-4-phosphate-binding protein that may antagonize the action of GOLPH3 which is required for the process of vesicle budding at the Golgi and anterograde transport to the plasma membrane. The chain is Golgi phosphoprotein 3-like (GOLPH3L) from Homo sapiens (Human).